A 114-amino-acid polypeptide reads, in one-letter code: Kita-kyushu lung cancer antigen 1 homolog (114 aa).

Residues 1 to 4 (MNVY) lie on the Cytoplasmic side of the membrane. Residues 5–22 (LLLASGILCALMTVFWKY) form a helical; Signal-anchor for type II membrane protein membrane-spanning segment. The Extracellular segment spans residues 23–114 (RRFQRNTGEM…RSASAHRKST (92 aa)). N-linked (GlcNAc...) asparagine glycosylation occurs at Asn-84.

It is found in the cell membrane. This chain is Kita-kyushu lung cancer antigen 1 homolog (CT83), found in Macaca fascicularis (Crab-eating macaque).